The sequence spans 579 residues: Glycine--tRNA ligase (579 aa).

Residue E175 coordinates glycine. Residues 207–209 and 218–219 contribute to the ATP site; these read RNE and RV. Residue E226 coordinates glycine. 327–328 serves as a coordination point for ATP; the sequence is EC. 442 to 444 is a binding site for glycine; that stretch reads EPS. R449 provides a ligand contact to ATP.

The protein belongs to the class-II aminoacyl-tRNA synthetase family. In terms of assembly, homodimer.

The catalysed reaction is tRNA(Gly) + glycine + ATP = glycyl-tRNA(Gly) + AMP + diphosphate. The enzyme catalyses 2 ATP + H(+) = P(1),P(4)-bis(5'-adenosyl) tetraphosphate + diphosphate. In terms of biological role, catalyzes the ATP-dependent ligation of glycine to the 3'-end of its cognate tRNA, via the formation of an aminoacyl-adenylate intermediate (Gly-AMP). Also produces diadenosine tetraphosphate (Ap4A), a universal pleiotropic signaling molecule needed for cell regulation pathways, by direct condensation of 2 ATPs. Thereby, may play a special role in Ap4A homeostasis. This chain is Glycine--tRNA ligase, found in Encephalitozoon cuniculi (strain GB-M1) (Microsporidian parasite).